Here is a 181-residue protein sequence, read N- to C-terminus: Early E3 20.3 kDa glycoprotein (181 aa).

Asparagine 29, asparagine 57, asparagine 70, and asparagine 75 each carry an N-linked (GlcNAc...) asparagine; by host glycan.

This sequence belongs to the adenoviridae E3_20 family.

In terms of biological role, E3 proteins seem to be dispensable for virus growth in tissue culture cells. They are potentially important for virus growth under special conditions; E3 region may help adenoviruses to evade the immune surveillance of the host. The protein is Early E3 20.3 kDa glycoprotein of Human adenovirus B serotype 11 (strain Slobiski) (HAdV-11).